The following is a 515-amino-acid chain: MSSTKKPLVLTILDGYGHREEQQDNAILNAKTPVMDVLWQQQPHTLIAASGLDVGLPDGQMGNSEVGHVNLGAGRIVYQDLTRLDKEIKEGDFFTNPTLTAAVDNAVKTGKAVHIMGLLSAGGVHSHEDHIMAMVELAAKRGATAIYLHAFLDGRDTPPRSAESSLKRFTAKFAELGNGRIASIIGRYYAMDRDNRWDRVQLAYDLLTQAKGEFTADNAVAGLQAAYARGENDEFVKPTVIQATGEADAAMNEGDTLIFMNFRADRARQITRTFVNADFDGFKRDKVVNFGDFIMLTEYAADIKVACAYPPASLTNTFGEWLMKHDKTQLRISETEKYAHVTFFYNGGVEEPFKGEDRILINSPKVATYDLQPEMSSAELTEKLVSAIGSGKYDVIICNYPNGDMVGHTGDYDAAVKAVETLDNCIEQVVAAVKAADGQLLITADHGNAEQMRDPATGQAHTAHTSLPVPLIYVGNKAVKAVEGGKLSDIAPTMLSLMEMEIPQEMTGKPLFIVE.

Positions 14 and 64 each coordinate Mn(2+). The Phosphoserine intermediate role is filled by Ser64. Residues His125, 155-156, Arg187, Arg193, 263-266, and Lys337 each bind substrate; these read RD and RADR. 5 residues coordinate Mn(2+): Asp404, His408, Asp445, His446, and His464.

Belongs to the BPG-independent phosphoglycerate mutase family. As to quaternary structure, monomer. Requires Mn(2+) as cofactor.

The catalysed reaction is (2R)-2-phosphoglycerate = (2R)-3-phosphoglycerate. Its pathway is carbohydrate degradation; glycolysis; pyruvate from D-glyceraldehyde 3-phosphate: step 3/5. Its function is as follows. Catalyzes the interconversion of 2-phosphoglycerate and 3-phosphoglycerate. In Yersinia pseudotuberculosis serotype I (strain IP32953), this protein is 2,3-bisphosphoglycerate-independent phosphoglycerate mutase.